The following is a 447-amino-acid chain: Methyl-coenzyme M reductase II subunit beta (447 aa).

Residue Tyr368 coordinates coenzyme M. Gly370 is a coenzyme B binding site.

This sequence belongs to the methyl-coenzyme M reductase beta subunit family. In terms of assembly, MCR is a hexamer of two alpha, two beta, and two gamma chains, forming a dimer of heterotrimers. The cofactor is coenzyme F430.

The enzyme catalyses coenzyme B + methyl-coenzyme M = methane + coenzyme M-coenzyme B heterodisulfide. The protein operates within one-carbon metabolism; methyl-coenzyme M reduction; methane from methyl-coenzyme M: step 1/1. Its function is as follows. Component of the methyl-coenzyme M reductase (MCR) I that catalyzes the reductive cleavage of methyl-coenzyme M (CoM-S-CH3 or 2-(methylthio)ethanesulfonate) using coenzyme B (CoB or 7-mercaptoheptanoylthreonine phosphate) as reductant which results in the production of methane and the mixed heterodisulfide of CoB and CoM (CoM-S-S-CoB). This is the final step in methanogenesis. The chain is Methyl-coenzyme M reductase II subunit beta (mrtB) from Methanocaldococcus jannaschii (strain ATCC 43067 / DSM 2661 / JAL-1 / JCM 10045 / NBRC 100440) (Methanococcus jannaschii).